Here is a 61-residue protein sequence, read N- to C-terminus: Small ribosomal subunit protein uS14 (61 aa).

4 residues coordinate Zn(2+): Cys24, Cys27, Cys40, and Cys43.

This sequence belongs to the universal ribosomal protein uS14 family. Zinc-binding uS14 subfamily. Part of the 30S ribosomal subunit. Contacts proteins S3 and S10. Requires Zn(2+) as cofactor.

Binds 16S rRNA, required for the assembly of 30S particles and may also be responsible for determining the conformation of the 16S rRNA at the A site. The polypeptide is Small ribosomal subunit protein uS14 (Dictyoglomus turgidum (strain DSM 6724 / Z-1310)).